Consider the following 368-residue polypeptide: Type 2 DNA topoisomerase 6 subunit A (368 aa).

In terms of domain architecture, Topo IIA-type catalytic spans 9–148; it reads PDTEEAREQL…FHMRPEESGA (140 aa). The active-site O-(5'-phospho-DNA)-tyrosine intermediate is Tyr103. Mg(2+)-binding residues include Glu201 and Asp253.

This sequence belongs to the TOP6A family. Homodimer. Heterotetramer of two Top6A and two Top6B chains. Mg(2+) serves as cofactor.

The catalysed reaction is ATP-dependent breakage, passage and rejoining of double-stranded DNA.. In terms of biological role, relaxes both positive and negative superturns and exhibits a strong decatenase activity. The protein is Type 2 DNA topoisomerase 6 subunit A of Haloarcula marismortui (strain ATCC 43049 / DSM 3752 / JCM 8966 / VKM B-1809) (Halobacterium marismortui).